We begin with the raw amino-acid sequence, 134 residues long: Small ribosomal subunit protein uS9c (134 aa).

A disordered region spans residues 105-134 (QGYLTRNPLRKERKKYGLKKARKAPQFSKR). A compositionally biased stretch (basic residues) spans 115–134 (KERKKYGLKKARKAPQFSKR).

This sequence belongs to the universal ribosomal protein uS9 family.

The protein resides in the plastid. Its subcellular location is the chloroplast. In Nephroselmis olivacea (Green alga), this protein is Small ribosomal subunit protein uS9c (rps9).